The primary structure comprises 318 residues: tRNA U34 carboxymethyltransferase (318 aa).

Residues lysine 88, tryptophan 102, lysine 107, glycine 126, methionine 192, tyrosine 196, and arginine 311 each coordinate carboxy-S-adenosyl-L-methionine.

It belongs to the class I-like SAM-binding methyltransferase superfamily. CmoB family. In terms of assembly, homotetramer.

It carries out the reaction carboxy-S-adenosyl-L-methionine + 5-hydroxyuridine(34) in tRNA = 5-carboxymethoxyuridine(34) in tRNA + S-adenosyl-L-homocysteine + H(+). Its function is as follows. Catalyzes carboxymethyl transfer from carboxy-S-adenosyl-L-methionine (Cx-SAM) to 5-hydroxyuridine (ho5U) to form 5-carboxymethoxyuridine (cmo5U) at position 34 in tRNAs. The polypeptide is tRNA U34 carboxymethyltransferase (Pseudomonas fluorescens (strain SBW25)).